A 416-amino-acid chain; its full sequence is Keratin, type I cuticular Ha1 (416 aa).

A head region spans residues 1–56 (MPYNFCLPSLSCRTSCSSRPCVPPSCHSCTLPGACNIPANVSNCNWFCEGSFNGSE). An IF rod domain is found at 56-367 (EKETMQFLND…SLLESEDCNL (312 aa)). A coil 1A region spans residues 57-91 (KETMQFLNDRLASYLEKVRQLERDNAELENLIRER). The interval 92–102 (SQQQEPLLCPS) is linker 1. The segment at 103-203 (YQSYFKTIEE…HEQEVNTLRC (101 aa)) is coil 1B. The interval 204–219 (QLGDRLNVEVDAAPTV) is linker 12. Residues 220–363 (DLNRVLNETR…NTYRSLLESE (144 aa)) form a coil 2 region. The interval 364 to 416 (DCNLPSNPCATTNACSKPIGPCLSNPCTPCVPPAPCTPCAPRPRCGPCNSFVR) is tail.

The protein belongs to the intermediate filament family.

This chain is Keratin, type I cuticular Ha1 (KRT31), found in Pan troglodytes (Chimpanzee).